A 272-amino-acid polypeptide reads, in one-letter code: Type III pantothenate kinase (272 aa).

6 to 13 (NVNNTNTL) is a binding site for ATP. 113 to 116 (GADR) lines the substrate pocket. Aspartate 115 acts as the Proton acceptor in catalysis. Aspartate 135 is a binding site for K(+). Threonine 138 serves as a coordination point for ATP. Residue threonine 190 participates in substrate binding.

This sequence belongs to the type III pantothenate kinase family. As to quaternary structure, homodimer. NH4(+) serves as cofactor. It depends on K(+) as a cofactor.

The protein localises to the cytoplasm. The enzyme catalyses (R)-pantothenate + ATP = (R)-4'-phosphopantothenate + ADP + H(+). It functions in the pathway cofactor biosynthesis; coenzyme A biosynthesis; CoA from (R)-pantothenate: step 1/5. In terms of biological role, catalyzes the phosphorylation of pantothenate (Pan), the first step in CoA biosynthesis. The chain is Type III pantothenate kinase from Acidobacterium capsulatum (strain ATCC 51196 / DSM 11244 / BCRC 80197 / JCM 7670 / NBRC 15755 / NCIMB 13165 / 161).